The sequence spans 376 residues: Arginine/serine-rich coiled-coil protein 2 (376 aa).

The interval 1–171 (MIRTNFLLKQ…PSPPPFRGRN (171 aa)) is disordered. The span at 13-52 (RHESKDKSSKRHKSEEHNDKEHSSDKGRERLNSSENGEDR) shows a compositional bias: basic and acidic residues. At Ser45 the chain carries Phosphoserine. A compositionally biased stretch (basic residues) spans 53-155 (HKRKERKSSR…KRIEKPRRFS (103 aa)). Residues 171 to 214 (NTAMDAQEALARRLERAKKLQEQREKEMVEKQKQQEMAAAAAAT) are a coiled coil. Lys317 is covalently cross-linked (Glycyl lysine isopeptide (Lys-Gly) (interchain with G-Cter in SUMO1); alternate). Lys317 participates in a covalent cross-link: Glycyl lysine isopeptide (Lys-Gly) (interchain with G-Cter in SUMO2); alternate. Ser318 is subject to Phosphoserine.

This sequence belongs to the RSRC2 family.

This Rattus norvegicus (Rat) protein is Arginine/serine-rich coiled-coil protein 2 (Rsrc2).